The following is a 367-amino-acid chain: Peroxidase 1 (367 aa).

Residues 1–33 form the signal peptide; it reads MAKESKLTAGVAAALTVVAACALCLLLPATARA. Q34 carries the pyrrolidone carboxylic acid modification. 4 disulfide bridges follow: C44–C125, C77–C82, C131–C335, and C209–C244. The Proton acceptor role is filled by H75. Residues D76, V79, G81, D83, and S85 each contribute to the Ca(2+) site. N-linked (GlcNAc...) asparagine glycosylation occurs at N164. Residue P172 coordinates substrate. Position 202 (H202) interacts with heme b. T203 provides a ligand contact to Ca(2+). N218 and N247 each carry an N-linked (GlcNAc...) asparagine glycan. Ca(2+) contacts are provided by D259, T262, and D267. A glycan (N-linked (GlcNAc...) asparagine) is linked at N303.

The protein belongs to the peroxidase family. Classical plant (class III) peroxidase subfamily. Heme b serves as cofactor. Ca(2+) is required as a cofactor. Expressed in the root tip meristems.

It is found in the secreted. Its subcellular location is the vacuole. The catalysed reaction is 2 a phenolic donor + H2O2 = 2 a phenolic radical donor + 2 H2O. In terms of biological role, removal of H(2)O(2), oxidation of toxic reductants, biosynthesis and degradation of lignin, suberization, auxin catabolism, response to environmental stresses such as wounding, pathogen attack and oxidative stress. These functions might be dependent on each isozyme/isoform in each plant tissue. The protein is Peroxidase 1 (PER1) of Zea mays (Maize).